We begin with the raw amino-acid sequence, 132 residues long: DNA-directed RNA polymerase subunit omega (132 aa).

The disordered stretch occupies residues Glu-76–Thr-105.

This sequence belongs to the RNA polymerase subunit omega family. The RNAP catalytic core consists of 2 alpha, 1 beta, 1 beta' and 1 omega subunit. When a sigma factor is associated with the core the holoenzyme is formed, which can initiate transcription.

It catalyses the reaction RNA(n) + a ribonucleoside 5'-triphosphate = RNA(n+1) + diphosphate. Its function is as follows. Promotes RNA polymerase assembly. Latches the N- and C-terminal regions of the beta' subunit thereby facilitating its interaction with the beta and alpha subunits. This chain is DNA-directed RNA polymerase subunit omega, found in Allorhizobium ampelinum (strain ATCC BAA-846 / DSM 112012 / S4) (Agrobacterium vitis (strain S4)).